Consider the following 308-residue polypeptide: uncharacterized protein (308 aa).

The active site involves E59.

This sequence belongs to the PhzF family.

This is an uncharacterized protein from Deinococcus radiodurans (strain ATCC 13939 / DSM 20539 / JCM 16871 / CCUG 27074 / LMG 4051 / NBRC 15346 / NCIMB 9279 / VKM B-1422 / R1).